The following is a 344-amino-acid chain: Dihydroorotase (344 aa).

The Zn(2+) site is built by H14 and H16. Substrate is bound by residues 16–18 (HLR) and N42. 3 residues coordinate Zn(2+): K100, H137, and H175. At K100 the chain carries N6-carboxylysine. Substrate is bound at residue H137. Residue L220 coordinates substrate. D248 is a binding site for Zn(2+). D248 is an active-site residue. Substrate-binding residues include H252 and A264.

The protein belongs to the metallo-dependent hydrolases superfamily. DHOase family. Class II DHOase subfamily. Homodimer. The cofactor is Zn(2+).

The catalysed reaction is (S)-dihydroorotate + H2O = N-carbamoyl-L-aspartate + H(+). It functions in the pathway pyrimidine metabolism; UMP biosynthesis via de novo pathway; (S)-dihydroorotate from bicarbonate: step 3/3. Catalyzes the reversible cyclization of carbamoyl aspartate to dihydroorotate. The polypeptide is Dihydroorotase (Ralstonia pickettii (strain 12J)).